A 161-amino-acid polypeptide reads, in one-letter code: Disulfide bond formation protein B (161 aa).

At methionine 1–tyrosine 8 the chain is on the cytoplasmic side. The chain crosses the membrane as a helical span at residues phenylalanine 9–tyrosine 25. The Periplasmic segment spans residues leucine 26–phenylalanine 43. The cysteines at positions 35 and 38 are disulfide-linked. Residues alanine 44–alanine 58 form a helical membrane-spanning segment. The Cytoplasmic portion of the chain corresponds to glutamine 59–serine 63. Residues leucine 64 to valine 81 form a helical membrane-spanning segment. The Periplasmic segment spans residues tyrosine 82–alanine 136. Cysteine 94 and cysteine 122 are disulfide-bonded. The chain crosses the membrane as a helical span at residues tryptophan 137–arginine 155. The Cytoplasmic segment spans residues arginine 156–arginine 161.

Belongs to the DsbB family.

It localises to the cell inner membrane. Required for disulfide bond formation in some periplasmic proteins. Acts by oxidizing the DsbA protein. The protein is Disulfide bond formation protein B of Cupriavidus necator (strain ATCC 17699 / DSM 428 / KCTC 22496 / NCIMB 10442 / H16 / Stanier 337) (Ralstonia eutropha).